Consider the following 325-residue polypeptide: Olfactory receptor 1S2 (325 aa).

The Extracellular segment spans residues 1–38 (MKTLCSFLQISRNMHQENQTTITEFILLGLSNQAEHQN). An N-linked (GlcNAc...) asparagine glycan is attached at asparagine 18. Residues 39 to 62 (LLFVLFLSMYVVTVVGNGLIIVAI) traverse the membrane as a helical segment. At 63–70 (SLDIYLHT) the chain is on the cytoplasmic side. Residues 71 to 92 (PMYLFLAYLSFADISSISNSVP) form a helical membrane-spanning segment. Residues 93 to 113 (KMLVNIQTNSQSISYESCITQ) lie on the Extracellular side of the membrane. A disulfide bridge links cysteine 110 with cysteine 202. Residues 114–133 (MYFSIVFVVTDNLLLGTMAF) form a helical membrane-spanning segment. Over 134-152 (DHFVAICHPLNYTTFMRAR) the chain is Cytoplasmic. Residues 153–171 (FGTLLTVISWFLSNIIALT) traverse the membrane as a helical segment. At 172-208 (HTLLLIQLLFCDHNTLPHFFCDLAPLLKLSCSDTMIN) the chain is on the extracellular side. Residues 209–232 (ELVLFIVGLSVIIFPFVLIFFSYV) form a helical membrane-spanning segment. The Cytoplasmic segment spans residues 233–249 (CIIRAVLGVSSTQGKWK). A helical transmembrane segment spans residues 250–272 (AFSTCGSHLTIALLFYGTTVGVY). Topologically, residues 273–285 (FFPSSTHPEDTDK) are extracellular. The helical transmembrane segment at 286-305 (IGAVLFTVVTPMMNPFIYSL) threads the bilayer. Over 306–325 (RNKDMKGALRKLINRKISSL) the chain is Cytoplasmic.

It belongs to the G-protein coupled receptor 1 family.

Its subcellular location is the cell membrane. Its function is as follows. Odorant receptor. The chain is Olfactory receptor 1S2 (OR1S2) from Homo sapiens (Human).